A 504-amino-acid chain; its full sequence is ATP synthase subunit alpha (504 aa).

169–176 lines the ATP pocket; that stretch reads GDRKTGKT.

The protein belongs to the ATPase alpha/beta chains family. F-type ATPases have 2 components, CF(1) - the catalytic core - and CF(0) - the membrane proton channel. CF(1) has five subunits: alpha(3), beta(3), gamma(1), delta(1), epsilon(1). CF(0) has three main subunits: a(1), b(2) and c(9-12). The alpha and beta chains form an alternating ring which encloses part of the gamma chain. CF(1) is attached to CF(0) by a central stalk formed by the gamma and epsilon chains, while a peripheral stalk is formed by the delta and b chains.

It is found in the cell membrane. It carries out the reaction ATP + H2O + 4 H(+)(in) = ADP + phosphate + 5 H(+)(out). In terms of biological role, produces ATP from ADP in the presence of a proton gradient across the membrane. The alpha chain is a regulatory subunit. The polypeptide is ATP synthase subunit alpha (Leuconostoc citreum (strain KM20)).